Here is a 212-residue protein sequence, read N- to C-terminus: ER lumen protein-retaining receptor 2 (212 aa).

The Lumenal segment spans residues 1–4; that stretch reads MNIF. Residues 5 to 24 traverse the membrane as a helical segment; that stretch reads RLTGDLSHLAAIIILLLKIW. Topologically, residues 25–32 are cytoplasmic; it reads KSRSCAGI. Residues 33–52 form a helical membrane-spanning segment; it reads SGKSQLLFALVFTTRYLDLF. Positions 47–48 are interaction with the K-D-E-L motif on target proteins; it reads RY. The Lumenal segment spans residues 53-58; sequence TSFISL. Residues 59 to 79 traverse the membrane as a helical segment; that stretch reads YNTSMKLIYIACSYATVYLIY. Over 80-92 the chain is Cytoplasmic; that stretch reads MKFKATYDGNHDT. A helical membrane pass occupies residues 93 to 110; the sequence is FRVEFLIVPVGGLSFLVN. Over 111-116 the chain is Lumenal; sequence HDFSPL. A helical transmembrane segment spans residues 117-135; sequence EILWTFSIYLESVAILPQL. Residues 136–149 are Cytoplasmic-facing; it reads FMISKTGEAETITT. Residues 150 to 168 traverse the membrane as a helical segment; that stretch reads HYLFFLGLYRALYLVNWIW. The interval 159–169 is interaction with the K-D-E-L motif on target proteins; sequence RALYLVNWIWR. The Lumenal portion of the chain corresponds to 169–178; that stretch reads RYYFEGFFDL. Residues 179 to 199 form a helical membrane-spanning segment; sequence IAVVAGVVQTVLYCDFFYLYV. Over 200 to 212 the chain is Cytoplasmic; it reads TKVLKGKKLSLPA. Residues 204 to 207 form an important for recycling of cargo proteins with the sequence motif K-D-E-L from the Golgi to the endoplasmic reticulum region; it reads KGKK.

This sequence belongs to the ERD2 family.

Its subcellular location is the endoplasmic reticulum membrane. The protein resides in the golgi apparatus membrane. The protein localises to the cytoplasmic vesicle. It is found in the COPI-coated vesicle membrane. Membrane receptor that binds the K-D-E-L sequence motif in the C-terminal part of endoplasmic reticulum resident proteins and maintains their localization in that compartment by participating to their vesicle-mediated recycling back from the Golgi. Binding is pH dependent, and is optimal at pH 5-5.4. This is ER lumen protein-retaining receptor 2 (KDELR2) from Gallus gallus (Chicken).